A 113-amino-acid polypeptide reads, in one-letter code: DNA-directed RNA polymerase subunit Rpo4 (113 aa).

The protein belongs to the eukaryotic RPB4 RNA polymerase subunit family. In terms of assembly, part of the 13-subunit RNA polymerase complex. Forms a stalk with Rpo7 that extends from the main structure.

The protein resides in the cytoplasm. The catalysed reaction is RNA(n) + a ribonucleoside 5'-triphosphate = RNA(n+1) + diphosphate. Its function is as follows. DNA-dependent RNA polymerase (RNAP) catalyzes the transcription of DNA into RNA using the four ribonucleoside triphosphates as substrates. This subunit is less well bound than the others. The sequence is that of DNA-directed RNA polymerase subunit Rpo4 from Saccharolobus solfataricus (strain ATCC 35092 / DSM 1617 / JCM 11322 / P2) (Sulfolobus solfataricus).